A 1955-amino-acid polypeptide reads, in one-letter code: Protocadherin-15 (1955 aa).

A signal peptide spans 1 to 26 (MFRQFYLWTCLASGIILGSLFEICLG). Residues 27-1376 (QYDDDCKLAR…GESLGYTEGA (1350 aa)) are Extracellular-facing. Cysteine 32 and cysteine 120 are joined by a disulfide. Cadherin domains are found at residues 40–147 (PATI…SPTF), 148–265 (KHES…GPMF), 278–395 (RPLT…SPYF), 396–509 (TMPS…TPTF), 510–616 (PEIS…PPRF), 617–717 (PQLM…APVF), 719–819 (PYLP…SPVF), 820–926 (TNST…PPVF), 927–1035 (SKRI…IPRF), 1037–1144 (QEEY…PPVF), and 1145–1259 (QKKF…PPTL). Asparagine 52, asparagine 97, and asparagine 201 each carry an N-linked (GlcNAc...) asparagine glycan. 7 N-linked (GlcNAc...) asparagine glycosylation sites follow: asparagine 419, asparagine 559, asparagine 662, asparagine 724, asparagine 768, asparagine 821, and asparagine 851. Asparagine 1064, asparagine 1084, and asparagine 1175 each carry an N-linked (GlcNAc...) asparagine glycan. A helical transmembrane segment spans residues 1377–1397 (LLALAFIIILCCIPAILVVLV). Topologically, residues 1398 to 1955 (SYRQFKVRQA…KQSHSQSTSL (558 aa)) are cytoplasmic. Positions 1426 to 1444 (VPAPAPVAAPPPPPPPPPG) are enriched in pro residues. 4 disordered regions span residues 1426–1446 (VPAP…PGAH), 1601–1623 (QGTR…GSSN), 1745–1766 (CPLP…APLA), and 1928–1955 (ITSE…STSL). Residues 1928–1941 (ITSEQNKGSLNNIV) are compositionally biased toward polar residues.

Antiparallel heterodimer with CDH23. Found in a complex with TMIE and LHFPL5. Interacts with LHFPL5/TMHS; this interaction is required for efficient localization to hair bundles. Interacts with MYO7A. Interacts with USH1G; this interaction may recruit USH1G to the plasma membrane. Interacts with TOMT. Isoforms CD1 and CD3 interact with TMC1 (via N-terminus) and TMC2 (via N-terminus). As to expression, expressed in brain, lung, kidney, spleen and testis. Found also in the inner and outer synaptic layers, and the nerve fiber layer in adult and fetal retinas. Found in the supporting cells, outer sulcus cells and spiral ganglion of fetal cochlea. Expressed in cytotoxic tumor-derived T- and NK-cell lines as well as biopsies of nasal NK/T-cell lymphomas. Not detected in normal or in vitro activated peripheral blood cells, CD4 or CD8 lymphocytes or NK cells. Isoform 3 is expressed in brain, heart, cerebellum and kidney. CD1 isoforms, such as isoform 1, have a limited pattern of expression and is detected in testis, retina and cochlea. CD2 isoforms, such as isoforms 4 and 5, are expressed in heart, kidney, thymus, spleen, testis, retina and cochlea. CD3 isoforms, such as isoform 6, are widely expressed.

It is found in the cell membrane. It localises to the secreted. Its function is as follows. Calcium-dependent cell-adhesion protein. Essential for maintenance of normal retinal and cochlear function. The sequence is that of Protocadherin-15 (PCDH15) from Homo sapiens (Human).